A 460-amino-acid chain; its full sequence is 2-methylcitrate synthase, mitochondrial (460 aa).

The N-terminal 24 residues, Met-1–Ala-24, are a transit peptide targeting the mitochondrion. CoA contacts are provided by Arg-69 and Lys-187. Oxaloacetate is bound at residue His-264. Leu-299 provides a ligand contact to CoA. His-300 is a catalytic residue. Val-341, Gly-343, and Tyr-344 together coordinate CoA. The oxaloacetate site is built by His-346 and Arg-355. His-346 is a catalytic residue. Residues Thr-395, Lys-396, and Asn-401 each coordinate CoA. Asp-403 is a catalytic residue. 2 residues coordinate oxaloacetate: Arg-429 and Arg-449.

It belongs to the citrate synthase family. As to quaternary structure, homodimer.

The protein localises to the mitochondrion matrix. It carries out the reaction propanoyl-CoA + oxaloacetate + H2O = (2S,3S)-2-methylcitrate + CoA + H(+). The catalysed reaction is oxaloacetate + acetyl-CoA + H2O = citrate + CoA + H(+). The protein operates within organic acid metabolism; propanoate degradation. Its activity is regulated as follows. Partially inhibited by ATP. In terms of biological role, catalyzes the synthesis of (2S,3S)-2-methylcitrate from propionyl-CoA and oxaloacetate and also from acetyl-CoA and oxaloacetate with a greater efficiency. Also has citrate synthase activity and can substitute for the loss of citA activity. This chain is 2-methylcitrate synthase, mitochondrial, found in Emericella nidulans (strain FGSC A4 / ATCC 38163 / CBS 112.46 / NRRL 194 / M139) (Aspergillus nidulans).